A 158-amino-acid polypeptide reads, in one-letter code: NADH-quinone oxidoreductase subunit B 1 (158 aa).

[4Fe-4S] cluster-binding residues include Cys37, Cys38, Cys102, and Cys132.

The protein belongs to the complex I 20 kDa subunit family. NDH-1 is composed of 14 different subunits. Subunits NuoB, C, D, E, F, and G constitute the peripheral sector of the complex. [4Fe-4S] cluster is required as a cofactor.

It localises to the cell inner membrane. It carries out the reaction a quinone + NADH + 5 H(+)(in) = a quinol + NAD(+) + 4 H(+)(out). Functionally, NDH-1 shuttles electrons from NADH, via FMN and iron-sulfur (Fe-S) centers, to quinones in the respiratory chain. Couples the redox reaction to proton translocation (for every two electrons transferred, four hydrogen ions are translocated across the cytoplasmic membrane), and thus conserves the redox energy in a proton gradient. This chain is NADH-quinone oxidoreductase subunit B 1, found in Chromobacterium violaceum (strain ATCC 12472 / DSM 30191 / JCM 1249 / CCUG 213 / NBRC 12614 / NCIMB 9131 / NCTC 9757 / MK).